The primary structure comprises 215 residues: Pyrrolidone-carboxylate peptidase (215 aa).

Catalysis depends on residues E81, C144, and H168.

It belongs to the peptidase C15 family. In terms of assembly, homotetramer.

The protein resides in the cytoplasm. The enzyme catalyses Release of an N-terminal pyroglutamyl group from a polypeptide, the second amino acid generally not being Pro.. In terms of biological role, removes 5-oxoproline from various penultimate amino acid residues except L-proline. The protein is Pyrrolidone-carboxylate peptidase (pcp) of Bacillus amyloliquefaciens (Bacillus velezensis).